A 311-amino-acid chain; its full sequence is MKLFAGNSNRVLAEAVARYLNIPLGKATVRRFADQEIFVEIQENVRGEDVFILQSTSFPTNDHLMELLIMIDAFMRSSAKRITAVIPYFGYARQDRRASGRTPISAKLVANMITRAGVDRVLTLDLHAGQIQGFFDIPTDNLFSVPVMARDVKAKYKQLGNVVVVSPDIGGVVRARALAKRFDAQLAIVDKRRERPGESEVMNIIGAVAGKDCLLIDDIVDSGGTLCNAADALLANGATSVTAYITHGVLSGGAVARISGSKLQELVITDSIQPTQGVLDAPNIRVISIADLMGEAISRTATEESVSSLFD.

Residues 34–36 (DQE) and 93–94 (RQ) contribute to the ATP site. Mg(2+)-binding residues include His127 and Asp168. Residue Lys191 is part of the active site. D-ribose 5-phosphate contacts are provided by residues Arg193, Asp217, and 221-225 (DSGGT).

The protein belongs to the ribose-phosphate pyrophosphokinase family. Class I subfamily. As to quaternary structure, homohexamer. Mg(2+) is required as a cofactor.

The protein resides in the cytoplasm. The catalysed reaction is D-ribose 5-phosphate + ATP = 5-phospho-alpha-D-ribose 1-diphosphate + AMP + H(+). It functions in the pathway metabolic intermediate biosynthesis; 5-phospho-alpha-D-ribose 1-diphosphate biosynthesis; 5-phospho-alpha-D-ribose 1-diphosphate from D-ribose 5-phosphate (route I): step 1/1. Its function is as follows. Involved in the biosynthesis of the central metabolite phospho-alpha-D-ribosyl-1-pyrophosphate (PRPP) via the transfer of pyrophosphoryl group from ATP to 1-hydroxyl of ribose-5-phosphate (Rib-5-P). The chain is Ribose-phosphate pyrophosphokinase from Mesorhizobium japonicum (strain LMG 29417 / CECT 9101 / MAFF 303099) (Mesorhizobium loti (strain MAFF 303099)).